Reading from the N-terminus, the 516-residue chain is Apolipoprotein N-acyltransferase (516 aa).

6 helical membrane passes run 24 to 44 (LAQA…LLYL), 58 to 78 (GWCY…ISIH), 90 to 110 (LLTL…AWLW), 125 to 145 (LAFA…LTGF), 163 to 183 (APLG…ALLV), and 192 to 212 (PPAL…GLAL). The CN hydrolase domain maps to 230–471 (VQGNVEQNLK…RAVLYGEVTP (242 aa)). The active-site Proton acceptor is the glutamate 270. Residue lysine 331 is part of the active site. Cysteine 383 acts as the Nucleophile in catalysis. The chain crosses the membrane as a helical span at residues 479-499 (LRWRAWPLAGLAVLLLGWALL).

This sequence belongs to the CN hydrolase family. Apolipoprotein N-acyltransferase subfamily.

Its subcellular location is the cell inner membrane. The catalysed reaction is N-terminal S-1,2-diacyl-sn-glyceryl-L-cysteinyl-[lipoprotein] + a glycerophospholipid = N-acyl-S-1,2-diacyl-sn-glyceryl-L-cysteinyl-[lipoprotein] + a 2-acyl-sn-glycero-3-phospholipid + H(+). It functions in the pathway protein modification; lipoprotein biosynthesis (N-acyl transfer). Its function is as follows. Catalyzes the phospholipid dependent N-acylation of the N-terminal cysteine of apolipoprotein, the last step in lipoprotein maturation. In Azotobacter vinelandii (strain DJ / ATCC BAA-1303), this protein is Apolipoprotein N-acyltransferase.